Reading from the N-terminus, the 267-residue chain is 4-hydroxy-tetrahydrodipicolinate reductase (267 aa).

NAD(+)-binding positions include glycine 12–methionine 17, glycine 100–threonine 102, and alanine 126–phenylalanine 129. Histidine 156 acts as the Proton donor/acceptor in catalysis. Histidine 157 contacts (S)-2,3,4,5-tetrahydrodipicolinate. Lysine 160 acts as the Proton donor in catalysis. Glycine 166–threonine 167 is a binding site for (S)-2,3,4,5-tetrahydrodipicolinate.

It belongs to the DapB family.

The protein resides in the cytoplasm. The enzyme catalyses (S)-2,3,4,5-tetrahydrodipicolinate + NAD(+) + H2O = (2S,4S)-4-hydroxy-2,3,4,5-tetrahydrodipicolinate + NADH + H(+). It carries out the reaction (S)-2,3,4,5-tetrahydrodipicolinate + NADP(+) + H2O = (2S,4S)-4-hydroxy-2,3,4,5-tetrahydrodipicolinate + NADPH + H(+). It functions in the pathway amino-acid biosynthesis; L-lysine biosynthesis via DAP pathway; (S)-tetrahydrodipicolinate from L-aspartate: step 4/4. Functionally, catalyzes the conversion of 4-hydroxy-tetrahydrodipicolinate (HTPA) to tetrahydrodipicolinate. In Bacillus licheniformis (strain ATCC 14580 / DSM 13 / JCM 2505 / CCUG 7422 / NBRC 12200 / NCIMB 9375 / NCTC 10341 / NRRL NRS-1264 / Gibson 46), this protein is 4-hydroxy-tetrahydrodipicolinate reductase.